The chain runs to 685 residues: A-type ATP synthase subunit I (685 aa).

Transmembrane regions (helical) follow at residues 172–192 (VGGL…VAVP), 348–368 (EIVP…LMFP), 394–414 (VIAV…EVFG), 464–484 (LFMG…NGVI), 538–558 (LVLA…PIIY), 604–624 (MFVI…ADVV), and 626–646 (ALLY…LAFA).

It belongs to the V-ATPase 116 kDa subunit family. In terms of assembly, has multiple subunits with at least A(3), B(3), C, D, E, F, H, I and proteolipid K(x).

The protein resides in the cell membrane. Its function is as follows. Component of the A-type ATP synthase that produces ATP from ADP in the presence of a proton gradient across the membrane. This is A-type ATP synthase subunit I from Aeropyrum pernix (strain ATCC 700893 / DSM 11879 / JCM 9820 / NBRC 100138 / K1).